We begin with the raw amino-acid sequence, 393 residues long: Acetyl-CoA acetyltransferase (393 aa).

C88 serves as the catalytic Acyl-thioester intermediate. Residues H349 and C379 each act as proton acceptor in the active site.

The protein belongs to the thiolase-like superfamily. Thiolase family. Homotetramer.

The protein localises to the cytoplasm. It carries out the reaction 2 acetyl-CoA = acetoacetyl-CoA + CoA. Its pathway is biopolymer metabolism; poly-(R)-3-hydroxybutanoate biosynthesis. With respect to regulation, the condensation reaction is inhibited by free CoA. The cleavage reaction is characterized by substrate inhibition by acetoacetyl-CoA, which is partially relieved by free CoA. In terms of biological role, catalyzes the condensation of two acetyl-coA units to form acetoacetyl-CoA. Is involved in the biosynthesis of polyhydroxybutyrate (PHB), which is accumulated as an intracellular energy reserve material when cells grow under conditions of nutrient limitation. Also catalyzes the reverse reaction, i.e. the cleavage of acetoacetyl-CoA, and is therefore also involved in the reutilization of PHB. This is Acetyl-CoA acetyltransferase from Cupriavidus necator (strain ATCC 17699 / DSM 428 / KCTC 22496 / NCIMB 10442 / H16 / Stanier 337) (Ralstonia eutropha).